The primary structure comprises 537 residues: Tegument protein BRRF2 (537 aa).

Disordered regions lie at residues 321-366 (RPRF…AVPP), 378-398 (AKQNRGGMGSLHLAKPEETSP), 414-466 (SKQH…DEEF), and 486-537 (GLRV…LSVV). A compositionally biased stretch (polar residues) spans 334 to 347 (EPQQTCSQLTSRGN). The span at 423 to 441 (SSQAAPSFSSVAPVASLSG) shows a compositional bias: low complexity. A compositionally biased stretch (acidic residues) spans 492–517 (DEDEDGSEDGEFSDLDLSDSDHEGDE).

This sequence belongs to the lymphocryptovirus BRRF2 family.

It localises to the virion tegument. The protein is Tegument protein BRRF2 of Homo sapiens (Human).